Reading from the N-terminus, the 207-residue chain is Ribosomal RNA small subunit methyltransferase G (207 aa).

S-adenosyl-L-methionine-binding positions include Gly-73, Leu-78, Val-124–Glu-125, and Arg-139.

This sequence belongs to the methyltransferase superfamily. RNA methyltransferase RsmG family.

The protein localises to the cytoplasm. The catalysed reaction is guanosine(527) in 16S rRNA + S-adenosyl-L-methionine = N(7)-methylguanosine(527) in 16S rRNA + S-adenosyl-L-homocysteine. Functionally, specifically methylates the N7 position of guanine in position 527 of 16S rRNA. The protein is Ribosomal RNA small subunit methyltransferase G of Enterobacter sp. (strain 638).